The sequence spans 377 residues: Chaperone protein DnaJ (377 aa).

Residues 5–70 (DYYQILGIPK…EKRSAYDQYG (66 aa)) enclose the J domain. Residues 132–210 (GIKKEIQIPT…CHGQGRVETY (79 aa)) form a CR-type zinc finger. Zn(2+) contacts are provided by C145, C148, C162, C165, C184, C187, C198, and C201. 4 CXXCXGXG motif repeats span residues 145 to 152 (CKTCYGSG), 162 to 169 (CSTCHGKG), 184 to 191 (CPTCHGKG), and 198 to 205 (CNLCHGQG).

It belongs to the DnaJ family. As to quaternary structure, homodimer. Requires Zn(2+) as cofactor.

The protein localises to the cytoplasm. In terms of biological role, participates actively in the response to hyperosmotic and heat shock by preventing the aggregation of stress-denatured proteins and by disaggregating proteins, also in an autonomous, DnaK-independent fashion. Unfolded proteins bind initially to DnaJ; upon interaction with the DnaJ-bound protein, DnaK hydrolyzes its bound ATP, resulting in the formation of a stable complex. GrpE releases ADP from DnaK; ATP binding to DnaK triggers the release of the substrate protein, thus completing the reaction cycle. Several rounds of ATP-dependent interactions between DnaJ, DnaK and GrpE are required for fully efficient folding. Also involved, together with DnaK and GrpE, in the DNA replication of plasmids through activation of initiation proteins. This is Chaperone protein DnaJ from Buchnera aphidicola subsp. Acyrthosiphon pisum (strain 5A).